A 481-amino-acid polypeptide reads, in one-letter code: Flavonol 3-O-glucosyltransferase UGT71C1 (481 aa).

The Proton acceptor role is filled by H19. H19 provides a ligand contact to an anthocyanidin. D131 serves as the catalytic Charge relay. The UDP-alpha-D-glucose site is built by T153, A352, Q354, H369, W372, N373, S374, and E377. A392 is an an anthocyanidin binding site. UDP-alpha-D-glucose-binding residues include E393 and Q394.

This sequence belongs to the UDP-glycosyltransferase family.

It catalyses the reaction a flavonol + UDP-alpha-D-glucose = a flavonol 3-O-beta-D-glucoside + UDP + H(+). The enzyme catalyses a 7-O-hydroxy-flavonol + UDP-alpha-D-glucose = a flavonol 7-O-beta-D-glucoside + UDP + H(+). Its function is as follows. Possesses quercetin 7-O-glucosyltransferase and 3'-O-glucosyltransferase activities in vitro. Also active in vitro on benzoates and benzoate derivatives. Glucosylates other secondary metabolites in vitro like trans-resveratrol, curcumin, vanillin and etoposide. In Arabidopsis thaliana (Mouse-ear cress), this protein is Flavonol 3-O-glucosyltransferase UGT71C1.